Consider the following 147-residue polypeptide: Hemoglobin subunit beta (147 aa).

One can recognise a Globin domain in the interval 3–147 (LLSAEENAHV…VANALAHKYH (145 aa)). At threonine 13 the chain carries Phosphothreonine. The residue at position 45 (serine 45) is a Phosphoserine. N6-acetyllysine is present on lysine 60. Histidine 64 contributes to the heme b binding site. Lysine 83 is modified (N6-acetyllysine). Heme b is bound at residue histidine 93. At cysteine 94 the chain carries S-nitrosocysteine. N6-acetyllysine is present on lysine 145.

It belongs to the globin family. In terms of assembly, heterotetramer of two alpha chains and two beta chains. As to expression, red blood cells.

Its function is as follows. Involved in oxygen transport from the lung to the various peripheral tissues. In Eulemur fulvus fulvus (Brown lemur), this protein is Hemoglobin subunit beta (HBB).